Here is a 360-residue protein sequence, read N- to C-terminus: E3 ubiquitin-protein ligase HAKAI homolog (360 aa).

Positions 1–11 (MLQIRLRRDSP) are enriched in basic and acidic residues. The segment at 1–24 (MLQIRLRRDSPTETGNGARPSPTE) is disordered. The RING-type zinc-finger motif lies at 72 to 107 (CVRCDFPIAIYGRLIPCDHAFCLECARSDSICYLCD). Residues 123-148 (FICAAPHCLRSFLKKLDFEAHVHDLH) form a C2H2-type zinc finger. The segment at 156–360 (AEKEDGNQSD…QENRDGFGQE (205 aa)) is disordered. Polar residues-rich tracts occupy residues 163-179 (QSDVQSTMQQSSASEST), 186-214 (SQLQQSRELNRSASFAKSQSGFSQVQNYP), and 270-283 (YPTTESGSSQQFFN). Positions 293-304 (ESGGSEQSSLLG) are enriched in low complexity.

It belongs to the Hakai family. As to quaternary structure, interacts with MTB and VIR. Associates with MTA, MTB, FIP37 and VIR to form the m6A writer complex which is essential for adenosine methylation at specific mRNA sequences.

The protein resides in the nucleus speckle. Its subcellular location is the nucleus. The protein localises to the nucleoplasm. The catalysed reaction is S-ubiquitinyl-[E2 ubiquitin-conjugating enzyme]-L-cysteine + [acceptor protein]-L-lysine = [E2 ubiquitin-conjugating enzyme]-L-cysteine + N(6)-ubiquitinyl-[acceptor protein]-L-lysine.. Functionally, probable E3 ubiquitin-protein ligase which is a subunit of the N6-methyltransferase complex, a multiprotein complex that mediates N6-methyladenosine (m6A) methylation at the 5'-[AG]GAC-3' consensus sites of some mRNAs. Associates with MTA, MTB, FIP37 and VIR to form the m6A writer complex which is essential for adenosine methylation at specific mRNA sequences. N6-methyladenosine (m6A) plays a role in mRNA stability, processing, translation efficiency and editing. This chain is E3 ubiquitin-protein ligase HAKAI homolog, found in Arabidopsis thaliana (Mouse-ear cress).